The primary structure comprises 581 residues: Interleukin-22 receptor subunit alpha-1 (581 aa).

An N-terminal signal peptide occupies residues Met-1–Ala-15. Residues His-16 to Ser-230 lie on the Extracellular side of the membrane. 2 consecutive Fibronectin type-III domains span residues Thr-18–Ser-115 and Pro-141–Thr-221. Cys-71 and Cys-79 are oxidised to a cystine. Residues Asn-80 and Asn-172 are each glycosylated (N-linked (GlcNAc...) asparagine). A disulfide bridge links Cys-128 with Cys-217. A helical membrane pass occupies residues Phe-231–Tyr-251. Over Lys-252–Ser-581 the chain is Cytoplasmic. The interval Gln-343 to Tyr-364 is disordered. Ser-410 and Ser-414 each carry phosphoserine; by GSK3-beta. Residue Lys-449 forms a Glycyl lysine isopeptide (Lys-Gly) (interchain with G-Cter in ubiquitin) linkage.

This sequence belongs to the type II cytokine receptor family. As to quaternary structure, heterodimer with IL10RB and with IL20RB. Post-translationally, phosphorylated by GSK3-BETA and MAPK; phosphorylation by GSK3-BETA stabilizes IL22RA1 by preventing its proteasomal degradation. As to expression, expressed in kidney, liver and lung.

It is found in the cell membrane. Functionally, component of the receptor for IL20, IL22 and IL24. Component of IL22 receptor formed by IL22RA1 and IL10RB enabling IL22 signaling via JAK/STAT pathways. IL22 also induces activation of MAPK1/MAPK3 and Akt kinases pathways. Component of one of the receptor for IL20 and IL24 formed by IL22RA1 and IL20RB also signaling through STATs activation. Mediates IL24 antiangiogenic activity as well as IL24 inhibitory effect on endothelial cell tube formation and differentiation. This is Interleukin-22 receptor subunit alpha-1 (Il22ra1) from Mus musculus (Mouse).